A 306-amino-acid chain; its full sequence is Probable pinoresinol-lariciresinol reductase 3 (306 aa).

NADP(+) is bound by residues 14–20 (GATGRLG), Arg-39, and Lys-46. Lys-131 (proton acceptor) is an active-site residue. An NADP(+)-binding site is contributed by Arg-135.

It belongs to the NmrA-type oxidoreductase family. Isoflavone reductase subfamily. In terms of assembly, dimer.

Probable reductase that might be involved in the reduction of lariciresinol into secoisolariciresinol. In most plant species, a single enzyme is able to reduce both pinoresinol and lariciresinol efficiently while in Arabidopsis, PRR1 and PRR2 show a strict substrate selectivity for pinoresinol. This Arabidopsis thaliana (Mouse-ear cress) protein is Probable pinoresinol-lariciresinol reductase 3 (PLR3).